A 111-amino-acid chain; its full sequence is Cell division protein FtsB (111 aa).

The Cytoplasmic portion of the chain corresponds to 1–3; the sequence is MRL. The helical transmembrane segment at 4-21 threads the bilayer; it reads ITLFLLLLLLAIQYPLWL. Residues 22-111 lie on the Periplasmic side of the membrane; the sequence is GKGGWLRVWD…PAALQPNHRH (90 aa). Positions 28 to 64 form a coiled coil; sequence RVWDMQKQVASQNQRNAELKQRNLKLEGEVKDLKEGT. The disordered stretch occupies residues 90–111; that stretch reads PAPKTSETPLPPPAALQPNHRH.

Belongs to the FtsB family. As to quaternary structure, part of a complex composed of FtsB, FtsL and FtsQ.

The protein resides in the cell inner membrane. In terms of biological role, essential cell division protein. May link together the upstream cell division proteins, which are predominantly cytoplasmic, with the downstream cell division proteins, which are predominantly periplasmic. This Ralstonia nicotianae (strain ATCC BAA-1114 / GMI1000) (Ralstonia solanacearum) protein is Cell division protein FtsB.